The chain runs to 243 residues: 1-(5-phosphoribosyl)-5-[(5-phosphoribosylamino)methylideneamino] imidazole-4-carboxamide isomerase (243 aa).

The active-site Proton acceptor is the D17. Catalysis depends on D138, which acts as the Proton donor.

Belongs to the HisA/HisF family.

The protein resides in the cytoplasm. It catalyses the reaction 1-(5-phospho-beta-D-ribosyl)-5-[(5-phospho-beta-D-ribosylamino)methylideneamino]imidazole-4-carboxamide = 5-[(5-phospho-1-deoxy-D-ribulos-1-ylimino)methylamino]-1-(5-phospho-beta-D-ribosyl)imidazole-4-carboxamide. It functions in the pathway amino-acid biosynthesis; L-histidine biosynthesis; L-histidine from 5-phospho-alpha-D-ribose 1-diphosphate: step 4/9. The polypeptide is 1-(5-phosphoribosyl)-5-[(5-phosphoribosylamino)methylideneamino] imidazole-4-carboxamide isomerase (Deinococcus geothermalis (strain DSM 11300 / CIP 105573 / AG-3a)).